We begin with the raw amino-acid sequence, 338 residues long: D-alanine--D-alanine ligase (338 aa).

The ATP-grasp domain maps to 120–324 (KRVMLAEGLP…YEDLCIEVLK (205 aa)). ATP is bound at residue 150 to 205 (PDKLGLPLIVKPAREGSSIGLTKVTERAGMADAVAQAEKLDADILCEQFISGDEVT). Residues D277, E291, and N293 each contribute to the Mg(2+) site.

Belongs to the D-alanine--D-alanine ligase family. Mg(2+) is required as a cofactor. It depends on Mn(2+) as a cofactor.

The protein localises to the cytoplasm. The enzyme catalyses 2 D-alanine + ATP = D-alanyl-D-alanine + ADP + phosphate + H(+). It functions in the pathway cell wall biogenesis; peptidoglycan biosynthesis. Its function is as follows. Cell wall formation. In Polaromonas sp. (strain JS666 / ATCC BAA-500), this protein is D-alanine--D-alanine ligase.